The sequence spans 108 residues: uncharacterized protein (108 aa).

Helical transmembrane passes span G26 to I46, L54 to F74, and I84 to M104.

It is found in the cell membrane. This is an uncharacterized protein from Methanocaldococcus jannaschii (strain ATCC 43067 / DSM 2661 / JAL-1 / JCM 10045 / NBRC 100440) (Methanococcus jannaschii).